A 362-amino-acid chain; its full sequence is 3-dehydroquinate synthase (362 aa).

NAD(+)-binding positions include 70–75 (EGEQYK), 104–108 (GVIGD), 128–129 (TT), lysine 141, lysine 150, and 168–171 (TLTT). 3 residues coordinate Zn(2+): glutamate 183, histidine 246, and histidine 263.

Belongs to the sugar phosphate cyclases superfamily. Dehydroquinate synthase family. Requires Co(2+) as cofactor. The cofactor is Zn(2+). NAD(+) is required as a cofactor.

The protein resides in the cytoplasm. It carries out the reaction 7-phospho-2-dehydro-3-deoxy-D-arabino-heptonate = 3-dehydroquinate + phosphate. The protein operates within metabolic intermediate biosynthesis; chorismate biosynthesis; chorismate from D-erythrose 4-phosphate and phosphoenolpyruvate: step 2/7. Functionally, catalyzes the conversion of 3-deoxy-D-arabino-heptulosonate 7-phosphate (DAHP) to dehydroquinate (DHQ). This chain is 3-dehydroquinate synthase, found in Histophilus somni (strain 129Pt) (Haemophilus somnus).